We begin with the raw amino-acid sequence, 206 residues long: Accelerated cell death 11 (206 aa).

An N-acylsphingoid base 1-phosphate is bound by residues Asp-60, Lys-64, Arg-99, Arg-103, and His-143.

This sequence belongs to the GLTP family. In terms of assembly, interacts with BPA1, PRA1F2 and PRA1F3.

It is found in the cytoplasm. Exhibits selective intermembrane transfer of ceramide-1-phosphate (C1P) and phytoceramide-1-phosphate. Does not transport ceramide (Cer) or GalCer, suggesting a requirement for phosphate in the headgroup for functionality. Transports in vitro sphingosine, but not glycosphingolipids. Also has some in vitro activity with sphingomyelin, a lipid not detected in plant tissues. The transport function may be not directly involved in regulating cell death. Rather, perturbations in the function of ACD11 or related components could be monitored by R-proteins, which then mediate defense and programmed cell death (PCD), as proposed in the guard hypothesis. C1P transfer is stimulated by phosphatidylserine in C1P source vesicles. Regulates autophagy, inflammasome mediated IL1B and IL18 processing, and pyroptosis, but not apoptosis. The sequence is that of Accelerated cell death 11 from Arabidopsis thaliana (Mouse-ear cress).